The sequence spans 204 residues: Peptide deformylase (204 aa).

2 residues coordinate Fe cation: C131 and H174. E175 is a catalytic residue. Residue H178 coordinates Fe cation.

This sequence belongs to the polypeptide deformylase family. Requires Fe(2+) as cofactor.

It carries out the reaction N-terminal N-formyl-L-methionyl-[peptide] + H2O = N-terminal L-methionyl-[peptide] + formate. Its function is as follows. Removes the formyl group from the N-terminal Met of newly synthesized proteins. Requires at least a dipeptide for an efficient rate of reaction. N-terminal L-methionine is a prerequisite for activity but the enzyme has broad specificity at other positions. In Streptococcus mutans serotype c (strain ATCC 700610 / UA159), this protein is Peptide deformylase.